The sequence spans 342 residues: Inositol-tetrakisphosphate 1-kinase 5 (342 aa).

1D-myo-inositol 1,3,4-trisphosphate-binding residues include Lys-25 and Lys-67. Positions 102 and 154 each coordinate ATP. Residues His-165 and Lys-197 each contribute to the 1D-myo-inositol 1,3,4-trisphosphate site. ATP is bound by residues 186 to 197 (QEFVNHGGVIFK) and Ser-212. Residues Asp-283, Asp-298, and Asn-300 each coordinate Mg(2+). Position 300 (Asn-300) interacts with 1D-myo-inositol 1,3,4-trisphosphate.

The protein belongs to the ITPK1 family. As to quaternary structure, monomer. The cofactor is Mg(2+). In terms of tissue distribution, expressed in roots, leaves, flowers, anthers and embryos.

The enzyme catalyses 1D-myo-inositol 3,4,5,6-tetrakisphosphate + ATP = 1D-myo-inositol 1,3,4,5,6-pentakisphosphate + ADP + H(+). It carries out the reaction 1D-myo-inositol 1,3,4-trisphosphate + ATP = 1D-myo-inositol 1,3,4,5-tetrakisphosphate + ADP + H(+). It catalyses the reaction 1D-myo-inositol 1,3,4-trisphosphate + ATP = 1D-myo-inositol 1,3,4,6-tetrakisphosphate + ADP + H(+). Functionally, kinase that can phosphorylate various inositol polyphosphate such as Ins(3,4,5,6)P4 or Ins(1,3,4)P3 and participates in phytic acid biosynthesis in developing seeds. Phytic acid is the primary storage form of phosphorus in cereal grains and other plant seeds. This chain is Inositol-tetrakisphosphate 1-kinase 5 (ITPK5), found in Oryza sativa subsp. japonica (Rice).